The sequence spans 89 residues: Small ribosomal subunit protein uS14 (89 aa).

This sequence belongs to the universal ribosomal protein uS14 family. Part of the 30S ribosomal subunit. Contacts proteins S3 and S10.

Its function is as follows. Binds 16S rRNA, required for the assembly of 30S particles and may also be responsible for determining the conformation of the 16S rRNA at the A site. This is Small ribosomal subunit protein uS14 from Streptococcus pneumoniae serotype 2 (strain D39 / NCTC 7466).